A 300-amino-acid chain; its full sequence is 33 kDa chaperonin (300 aa).

Cystine bridges form between C235-C237 and C269-C272.

It belongs to the HSP33 family. Post-translationally, under oxidizing conditions two disulfide bonds are formed involving the reactive cysteines. Under reducing conditions zinc is bound to the reactive cysteines and the protein is inactive.

It localises to the cytoplasm. Redox regulated molecular chaperone. Protects both thermally unfolding and oxidatively damaged proteins from irreversible aggregation. Plays an important role in the bacterial defense system toward oxidative stress. The polypeptide is 33 kDa chaperonin (Pseudomonas syringae pv. tomato (strain ATCC BAA-871 / DC3000)).